The sequence spans 441 residues: Acidic phosphoprotein (441 aa).

The segment at residues 1 to 15 (MKAISLGLISSIIFS) is a signal peptide (or 24). N-linked (GlcNAc...) asparagine glycans are attached at residues Asn21 and Asn112. 18 repeat units span residues 186–193 (EEDPYLLQ), 194–201 (EEDALSLM), 202–209 (EYDAETLN), 210–217 (EGDAETLN), 218–225 (EGDAETLN), 226–233 (EYDAGTLN), 234–241 (EEDAGTTN), 242–249 (EAGEGTTN), 250–257 (EEGEGAAN), 258–265 (EYDAETLN), 266–273 (EYDADTLN), 274–281 (EYDAGTLN), 282–289 (EYDAGTLN), 290–297 (EEEGSTTN), 298–305 (EAGEGTSN), 306–313 (EAGEGTAN), 353–360 (KGNENEGE), and 361–368 (QKGNENEG). A 16 X 8 AA tandem repeats region spans residues 186-313 (EEDPYLLQEE…SNEAGEGTAN (128 aa)). The interval 232-416 (LNEEDAGTTN…EKEKKKEKKV (185 aa)) is disordered. A compositionally biased stretch (low complexity) spans 238 to 247 (GTTNEAGEGT). Positions 248–273 (TNEEGEGAANEYDAETLNEYDADTLN) are enriched in acidic residues. Over residues 294–306 (STTNEAGEGTSNE) the composition is skewed to polar residues. Residues 312-332 (ANDDEELDEEVASIFDDDEHA) show a composition bias toward acidic residues. The segment covering 349-371 (ENVKKGNENEGEQKGNENEGEQK) has biased composition (basic and acidic residues). The interval 353–370 (KGNENEGEQKGNENEGEQ) is 2 X 9 AA tandem repeats. Residues 372–415 (GKKKKAKEKSKKKVKNKPTMTTKKKKKKEKKKKKKEKEKKKEKK) show a composition bias toward basic residues.

The protein localises to the cell membrane. Functionally, during infection, this phosphoprotein probably modulates the structure of the red cell membrane to the advantage of the parasite, although its precise function is not known. This Plasmodium chabaudi protein is Acidic phosphoprotein (PCEMA1).